A 119-amino-acid chain; its full sequence is Small ribosomal subunit protein bS6 (119 aa).

This sequence belongs to the bacterial ribosomal protein bS6 family.

Its function is as follows. Binds together with bS18 to 16S ribosomal RNA. The polypeptide is Small ribosomal subunit protein bS6 (Buchnera aphidicola subsp. Baizongia pistaciae (strain Bp)).